We begin with the raw amino-acid sequence, 341 residues long: Antihemorrhagic factor BJ46a (341 aa).

Residues 1-19 form the signal peptide; sequence MNSLVALVLLGQIIGSTLS. Cystatin fetuin-A-type domains follow at residues 22-130 and 141-254; these read VRGD…AKCH and RNCP…SDCV. The Cell attachment site motif lies at 23 to 25; the sequence is RGD. Cystine bridges form between Cys28/Cys332, Cys85/Cys96, Cys110/Cys129, Cys143/Cys146, Cys205/Cys217, and Cys230/Cys253. Asn95 is a glycosylation site (N-linked (GlcNAc...) asparagine). Residue Asn204 is glycosylated (N-linked (GlcNAc...) asparagine). 2 N-linked (GlcNAc...) asparagine glycosylation sites follow: Asn282 and Asn293.

As to quaternary structure, homodimer. Expressed by the liver.

It is found in the secreted. Functionally, potent inhibitor of hemorrhagic activity but also proteolytic activities of atrolysin C and jararhagin. Inhibition occurs by formation of a non-covalent complex between BJ46a and the proteinases at their metalloproteinase domains. This Bothrops jararaca (Jararaca) protein is Antihemorrhagic factor BJ46a.